Here is an 89-residue protein sequence, read N- to C-terminus: Small ribosomal subunit protein uS15 (89 aa).

This sequence belongs to the universal ribosomal protein uS15 family. In terms of assembly, part of the 30S ribosomal subunit. Forms a bridge to the 50S subunit in the 70S ribosome, contacting the 23S rRNA.

In terms of biological role, one of the primary rRNA binding proteins, it binds directly to 16S rRNA where it helps nucleate assembly of the platform of the 30S subunit by binding and bridging several RNA helices of the 16S rRNA. Forms an intersubunit bridge (bridge B4) with the 23S rRNA of the 50S subunit in the ribosome. This is Small ribosomal subunit protein uS15 from Protochlamydia amoebophila (strain UWE25).